Consider the following 330-residue polypeptide: Malate dehydrogenase (330 aa).

NAD(+) is bound at residue 12–18 (GAAGQIG). Residues arginine 93 and arginine 99 each coordinate substrate. Residues asparagine 106, glutamine 113, and 130-132 (VGN) each bind NAD(+). Substrate contacts are provided by asparagine 132 and arginine 163. Histidine 188 functions as the Proton acceptor in the catalytic mechanism.

This sequence belongs to the LDH/MDH superfamily. MDH type 2 family.

The enzyme catalyses (S)-malate + NAD(+) = oxaloacetate + NADH + H(+). Catalyzes the reversible oxidation of malate to oxaloacetate. The polypeptide is Malate dehydrogenase (Thermobifida fusca (strain YX)).